The sequence spans 1054 residues: Probable sucrose-phosphate synthase 1 (1054 aa).

A compositionally biased stretch (basic and acidic residues) spans 104-115 (RLERERGRREAV). 3 disordered regions span residues 104 to 125 (RLER…LSEG), 674 to 693 (LRNE…SDSL), and 708 to 727 (DGDK…DDRA).

Belongs to the glycosyltransferase 1 family. In terms of assembly, homodimer or homotetramer.

It catalyses the reaction beta-D-fructose 6-phosphate + UDP-alpha-D-glucose = sucrose 6(F)-phosphate + UDP + H(+). The protein operates within glycan biosynthesis; sucrose biosynthesis; sucrose from D-fructose 6-phosphate and UDP-alpha-D-glucose: step 1/2. Its activity is regulated as follows. Activity is regulated by phosphorylation and moderated by concentration of metabolites and light. Its function is as follows. Plays a role in photosynthetic sucrose synthesis by catalyzing the rate-limiting step of sucrose biosynthesis from UDP-glucose and fructose- 6-phosphate. Involved in the regulation of carbon partitioning in the leaves of plants. May regulate the synthesis of sucrose and therefore play a major role as a limiting factor in the export of photoassimilates out of the leaf. Plays a role for sucrose availability that is essential for plant growth and fiber elongation. The chain is Probable sucrose-phosphate synthase 1 (SPS1) from Craterostigma plantagineum (Blue gem).